Consider the following 276-residue polypeptide: MLEIHNLQKSYSTGDKALKGVNLSVQPGELLGLIGPSGAGKSTLIRCVNRLVEPSEGRVLLNGKDLANLGRHDLRMARRRIGMIFQEYALVERLTVMENLLSGRLGYSGFWPSWFRRFSPEDIRLAYALLERVGLDGMHNKRADALSGGQRQRVGIARALMQKPDLLLVDEPTASLDPKTSRQVMRLVLELCREHGLSAIINIHDVVLATEYLPRIVGLRAGAVVYDGPASAIDTHVLTRIYGAEDWSSITDRMTGTTVPGDEQAARVATIAIAAE.

An ABC transporter domain is found at 2–246; sequence LEIHNLQKSY…VLTRIYGAED (245 aa). Residue 35–42 coordinates ATP; sequence GPSGAGKS.

Belongs to the ABC transporter superfamily. Phosphonates importer (TC 3.A.1.9.1) family. In terms of assembly, the complex is composed of two ATP-binding proteins (PhnC), two transmembrane proteins (PhnE) and a solute-binding protein (PhnD).

It localises to the cell inner membrane. It catalyses the reaction phosphonate(out) + ATP + H2O = phosphonate(in) + ADP + phosphate + H(+). In terms of biological role, part of the ABC transporter complex PhnCDE involved in phosphonates import. Responsible for energy coupling to the transport system. This is Phosphonates import ATP-binding protein PhnC from Alcaligenes faecalis.